The primary structure comprises 140 residues: Holo-[acyl-carrier-protein] synthase (140 aa).

The Mg(2+) site is built by aspartate 9 and glutamate 63.

This sequence belongs to the P-Pant transferase superfamily. AcpS family. The cofactor is Mg(2+).

The protein resides in the cytoplasm. The catalysed reaction is apo-[ACP] + CoA = holo-[ACP] + adenosine 3',5'-bisphosphate + H(+). In terms of biological role, transfers the 4'-phosphopantetheine moiety from coenzyme A to a Ser of acyl-carrier-protein. This Paraburkholderia phytofirmans (strain DSM 17436 / LMG 22146 / PsJN) (Burkholderia phytofirmans) protein is Holo-[acyl-carrier-protein] synthase.